The sequence spans 391 residues: Carbamoyl phosphate synthase small chain (391 aa).

The CPSase stretch occupies residues Met1–Glu202. 3 residues coordinate L-glutamine: Ser47, Gly254, and Gly256. The Glutamine amidotransferase type-1 domain occupies Lys206–Ala391. Cys282 acts as the Nucleophile in catalysis. L-glutamine contacts are provided by Leu283, Gln286, Asn324, Gly326, and Phe327. Catalysis depends on residues His366 and Glu368.

The protein belongs to the CarA family. In terms of assembly, composed of two chains; the small (or glutamine) chain promotes the hydrolysis of glutamine to ammonia, which is used by the large (or ammonia) chain to synthesize carbamoyl phosphate. Tetramer of heterodimers (alpha,beta)4.

The catalysed reaction is hydrogencarbonate + L-glutamine + 2 ATP + H2O = carbamoyl phosphate + L-glutamate + 2 ADP + phosphate + 2 H(+). It catalyses the reaction L-glutamine + H2O = L-glutamate + NH4(+). It functions in the pathway amino-acid biosynthesis; L-arginine biosynthesis; carbamoyl phosphate from bicarbonate: step 1/1. The protein operates within pyrimidine metabolism; UMP biosynthesis via de novo pathway; (S)-dihydroorotate from bicarbonate: step 1/3. In terms of biological role, small subunit of the glutamine-dependent carbamoyl phosphate synthetase (CPSase). CPSase catalyzes the formation of carbamoyl phosphate from the ammonia moiety of glutamine, carbonate, and phosphate donated by ATP, constituting the first step of 2 biosynthetic pathways, one leading to arginine and/or urea and the other to pyrimidine nucleotides. The small subunit (glutamine amidotransferase) binds and cleaves glutamine to supply the large subunit with the substrate ammonia. This is Carbamoyl phosphate synthase small chain from Xanthomonas axonopodis pv. citri (strain 306).